The following is a 226-amino-acid chain: Neuron-specific vesicular protein calcyon (226 aa).

Positions 1–21 are disordered; sequence MVKLGCSFSGKPGKEAGDQDG. At 1 to 88 the chain is on the extracellular side; it reads MVKLGCSFSG…EEGRRLPTAR (88 aa). The helical transmembrane segment at 89 to 109 threads the bilayer; it reads MIAFAMALLGCVLIMYKAIWY. The Cytoplasmic portion of the chain corresponds to 110–226; that stretch reads DQFTCPDGFL…AEGVPSQPPK (117 aa). A disordered region spans residues 177 to 226; that stretch reads HKGTTPAAMAVSTAAAAAAAEGTEPSGKSLDTREKEDPQKAEGVPSQPPK. The segment covering 183-196 has biased composition (low complexity); sequence AAMAVSTAAAAAAA. The segment covering 206–216 has biased composition (basic and acidic residues); that stretch reads LDTREKEDPQK.

Belongs to the NSG family. As to quaternary structure, interacts with CLTA. As to expression, most abundant in brain. Also expressed in testis and ovary and, at much lower levels, in kidney and heart.

Its subcellular location is the cytoplasmic vesicle membrane. The protein localises to the cell membrane. In terms of biological role, interacts with clathrin light chain A and stimulates clathrin self-assembly and clathrin-mediated endocytosis. This Mus musculus (Mouse) protein is Neuron-specific vesicular protein calcyon (Caly).